Consider the following 56-residue polypeptide: UPF0434 protein CBUD_1597.1 (56 aa).

This sequence belongs to the UPF0434 family.

The chain is UPF0434 protein CBUD_1597.1 from Coxiella burnetii (strain Dugway 5J108-111).